Here is a 185-residue protein sequence, read N- to C-terminus: Peptidyl-tRNA hydrolase (185 aa).

Tyr-14 is a tRNA binding site. The Proton acceptor role is filled by His-19. Phe-64, Asn-66, and Asn-112 together coordinate tRNA.

The protein belongs to the PTH family. As to quaternary structure, monomer.

It localises to the cytoplasm. The catalysed reaction is an N-acyl-L-alpha-aminoacyl-tRNA + H2O = an N-acyl-L-amino acid + a tRNA + H(+). Its function is as follows. Hydrolyzes ribosome-free peptidyl-tRNAs (with 1 or more amino acids incorporated), which drop off the ribosome during protein synthesis, or as a result of ribosome stalling. Functionally, catalyzes the release of premature peptidyl moieties from peptidyl-tRNA molecules trapped in stalled 50S ribosomal subunits, and thus maintains levels of free tRNAs and 50S ribosomes. This chain is Peptidyl-tRNA hydrolase, found in Lactobacillus gasseri (strain ATCC 33323 / DSM 20243 / BCRC 14619 / CIP 102991 / JCM 1131 / KCTC 3163 / NCIMB 11718 / NCTC 13722 / AM63).